Here is a 500-residue protein sequence, read N- to C-terminus: MSDLKTESQDLQQEENALIALRKEKLAAERAKGNAFPNDFRRDSYCNDLQKQYADKTKEELEAAAIPVKVAGRIMLNRGSFMVIQDMTGRIQVYVNRKTLPEETLAAVKTWDLGDIISAEGTLARSGKGDLYVEMTNVRLLTKSLRPLPDKHHGLTDTEQRYRQRYVDLMVNEETRHTFRVRSQVISHIRKFLIERDFLEVETPMLQTIPGGAAAKPFETHHNALDMAMFLRIAPELYLKRLVVGGFEKVFEINRNFRNEGVSTRHNPEFTMLEFYQAYADYRDNMDLTEELFRELAQLVLGSTDVPYGDKVFHFGEPFVRLSVFDSILKYNPELTAADLQDVDRAREIARKAGAKVLGHEGLGKLQVMIFEELVEHKLEQPHFITEYPFEVSPLARRNDDNPAVTDRFELFIGGREIANAYSELNDAEDQAERFLAQVAEKDAGDDEAMHYDADFVRALEYGMPPTAGEGIGIDRLVMLLTNSPSIRDVILFPHMRPQA.

Mg(2+)-binding residues include Glu410 and Glu417.

The protein belongs to the class-II aminoacyl-tRNA synthetase family. Homodimer. Mg(2+) is required as a cofactor.

It localises to the cytoplasm. The enzyme catalyses tRNA(Lys) + L-lysine + ATP = L-lysyl-tRNA(Lys) + AMP + diphosphate. This Pseudomonas putida (strain ATCC 47054 / DSM 6125 / CFBP 8728 / NCIMB 11950 / KT2440) protein is Lysine--tRNA ligase.